Consider the following 333-residue polypeptide: Ribosomal protein L11 methyltransferase (333 aa).

The S-adenosyl-L-methionine site is built by T181, G202, D224, and N268.

The protein belongs to the methyltransferase superfamily. PrmA family.

Its subcellular location is the cytoplasm. It carries out the reaction L-lysyl-[protein] + 3 S-adenosyl-L-methionine = N(6),N(6),N(6)-trimethyl-L-lysyl-[protein] + 3 S-adenosyl-L-homocysteine + 3 H(+). Methylates ribosomal protein L11. This Helicobacter pylori (strain ATCC 700392 / 26695) (Campylobacter pylori) protein is Ribosomal protein L11 methyltransferase.